Here is a 470-residue protein sequence, read N- to C-terminus: Ribulose bisphosphate carboxylase large chain (470 aa).

K5 bears the N6,N6,N6-trimethyllysine mark. Positions 114 and 164 each coordinate substrate. The active-site Proton acceptor is the K166. Substrate is bound at residue K168. Mg(2+)-binding residues include K192, D194, and E195. Residue K192 is modified to N6-carboxylysine. The active-site Proton acceptor is the H285. Residues R286, H318, and S370 each coordinate substrate.

Belongs to the RuBisCO large chain family. Type I subfamily. Heterohexadecamer of 8 large chains and 8 small chains; disulfide-linked. The disulfide link is formed within the large subunit homodimers. Requires Mg(2+) as cofactor. In terms of processing, the disulfide bond which can form in the large chain dimeric partners within the hexadecamer appears to be associated with oxidative stress and protein turnover.

It is found in the plastid. The protein resides in the chloroplast. The enzyme catalyses 2 (2R)-3-phosphoglycerate + 2 H(+) = D-ribulose 1,5-bisphosphate + CO2 + H2O. It carries out the reaction D-ribulose 1,5-bisphosphate + O2 = 2-phosphoglycolate + (2R)-3-phosphoglycerate + 2 H(+). RuBisCO catalyzes two reactions: the carboxylation of D-ribulose 1,5-bisphosphate, the primary event in carbon dioxide fixation, as well as the oxidative fragmentation of the pentose substrate in the photorespiration process. Both reactions occur simultaneously and in competition at the same active site. This Kigelia africana (Sausage tree) protein is Ribulose bisphosphate carboxylase large chain.